Reading from the N-terminus, the 193-residue chain is Calcium-binding protein E63-1 (193 aa).

4 consecutive EF-hand domains span residues 35–70, 71–106, 127–162, and 163–193; these read VEIKDLRTAFDLLDRNRDGRVTANELQFMLKNLGIN, VSDELIHDLIREASHSGNGLINEAEFLQWVGRIQAL, DVTEDLIAAFRVFDRDGNGFITRDELQTAMEMIGEP, and LNEQQLEQLLVIADLDQDGRINYEEFTRLLL. Aspartate 48, asparagine 50, aspartate 52, arginine 54, and glutamate 59 together coordinate Ca(2+). Ca(2+)-binding residues include aspartate 140, aspartate 142, asparagine 144, glutamate 151, aspartate 176, aspartate 178, aspartate 180, arginine 182, and glutamate 187.

In Drosophila melanogaster (Fruit fly), this protein is Calcium-binding protein E63-1 (Eip63F-1).